A 154-amino-acid polypeptide reads, in one-letter code: Prefoldin subunit 5 (154 aa).

Ala2 carries the N-acetylalanine modification. An N6-acetyllysine modification is found at Lys42. Ser56 is subject to Phosphoserine.

The protein belongs to the prefoldin subunit alpha family. As to quaternary structure, heterohexamer of two PFD-alpha type and four PFD-beta type subunits. Binds to MYC; interacts with its N-terminal domain. In terms of tissue distribution, highly expressed in pancreas and skeletal muscle and moderately in other tissues.

The protein resides in the nucleus. Its subcellular location is the cytoplasm. In terms of biological role, binds specifically to cytosolic chaperonin (c-CPN) and transfers target proteins to it. Binds to nascent polypeptide chain and promotes folding in an environment in which there are many competing pathways for nonnative proteins. Represses the transcriptional activity of MYC. The polypeptide is Prefoldin subunit 5 (PFDN5) (Homo sapiens (Human)).